The chain runs to 262 residues: Phosphonates import ATP-binding protein PhnC (262 aa).

The ABC transporter domain occupies isoleucine 5–asparagine 253. An ATP-binding site is contributed by glycine 37 to serine 44.

This sequence belongs to the ABC transporter superfamily. Phosphonates importer (TC 3.A.1.9.1) family. In terms of assembly, the complex is composed of two ATP-binding proteins (PhnC), two transmembrane proteins (PhnE) and a solute-binding protein (PhnD).

Its subcellular location is the cell inner membrane. The catalysed reaction is phosphonate(out) + ATP + H2O = phosphonate(in) + ADP + phosphate + H(+). In terms of biological role, part of the ABC transporter complex PhnCDE involved in phosphonates import. Responsible for energy coupling to the transport system. This chain is Phosphonates import ATP-binding protein PhnC, found in Escherichia coli O157:H7.